Here is a 288-residue protein sequence, read N- to C-terminus: NAD kinase (288 aa).

Catalysis depends on D70, which acts as the Proton acceptor. Residues 70–71, 144–145, R155, K172, D174, 185–190, and Q245 each bind NAD(+); these read DG, ND, and TGYSLS.

It belongs to the NAD kinase family. It depends on a divalent metal cation as a cofactor.

The protein resides in the cytoplasm. The catalysed reaction is NAD(+) + ATP = ADP + NADP(+) + H(+). In terms of biological role, involved in the regulation of the intracellular balance of NAD and NADP, and is a key enzyme in the biosynthesis of NADP. Catalyzes specifically the phosphorylation on 2'-hydroxyl of the adenosine moiety of NAD to yield NADP. This is NAD kinase from Geobacter sp. (strain M21).